The primary structure comprises 474 residues: tRNA-2-methylthio-N(6)-dimethylallyladenosine synthase (474 aa).

Residues 3–120 (KKLHIKTWGC…LPDMIEQVRR (118 aa)) form the MTTase N-terminal domain. The [4Fe-4S] cluster site is built by Cys-12, Cys-49, Cys-83, Cys-157, Cys-161, and Cys-164. Residues 143–375 (RAEGPTAFVS…QDRITQQAMR (233 aa)) form the Radical SAM core domain. Residues 378-441 (RHMMGTVQRI…TNSLRGKFIR (64 aa)) form the TRAM domain.

This sequence belongs to the methylthiotransferase family. MiaB subfamily. As to quaternary structure, monomer. [4Fe-4S] cluster serves as cofactor.

The protein resides in the cytoplasm. It carries out the reaction N(6)-dimethylallyladenosine(37) in tRNA + (sulfur carrier)-SH + AH2 + 2 S-adenosyl-L-methionine = 2-methylsulfanyl-N(6)-dimethylallyladenosine(37) in tRNA + (sulfur carrier)-H + 5'-deoxyadenosine + L-methionine + A + S-adenosyl-L-homocysteine + 2 H(+). Functionally, catalyzes the methylthiolation of N6-(dimethylallyl)adenosine (i(6)A), leading to the formation of 2-methylthio-N6-(dimethylallyl)adenosine (ms(2)i(6)A) at position 37 in tRNAs that read codons beginning with uridine. The protein is tRNA-2-methylthio-N(6)-dimethylallyladenosine synthase of Shewanella sp. (strain MR-4).